Reading from the N-terminus, the 303-residue chain is Acetylglutamate kinase (303 aa).

Residues G76–G77, R98, and N192 each bind substrate.

This sequence belongs to the acetylglutamate kinase family. ArgB subfamily.

It localises to the cytoplasm. It catalyses the reaction N-acetyl-L-glutamate + ATP = N-acetyl-L-glutamyl 5-phosphate + ADP. It participates in amino-acid biosynthesis; L-arginine biosynthesis; N(2)-acetyl-L-ornithine from L-glutamate: step 2/4. Its function is as follows. Catalyzes the ATP-dependent phosphorylation of N-acetyl-L-glutamate. This Chlorobium phaeobacteroides (strain DSM 266 / SMG 266 / 2430) protein is Acetylglutamate kinase.